An 851-amino-acid polypeptide reads, in one-letter code: DNA mismatch repair protein MutS (851 aa).

602-609 (GPNMSGKS) serves as a coordination point for ATP.

This sequence belongs to the DNA mismatch repair MutS family.

This protein is involved in the repair of mismatches in DNA. It is possible that it carries out the mismatch recognition step. This protein has a weak ATPase activity. This is DNA mismatch repair protein MutS from Streptococcus pyogenes serotype M28 (strain MGAS6180).